The sequence spans 146 residues: Holo-[acyl-carrier-protein] synthase (146 aa).

Mg(2+) is bound by residues aspartate 9 and glutamate 58.

It belongs to the P-Pant transferase superfamily. AcpS family. Mg(2+) is required as a cofactor.

Its subcellular location is the cytoplasm. It carries out the reaction apo-[ACP] + CoA = holo-[ACP] + adenosine 3',5'-bisphosphate + H(+). Functionally, transfers the 4'-phosphopantetheine moiety from coenzyme A to a Ser of acyl-carrier-protein. This Baumannia cicadellinicola subsp. Homalodisca coagulata protein is Holo-[acyl-carrier-protein] synthase.